Reading from the N-terminus, the 508-residue chain is MPPSNPAMVNGLNGSHANGNGNGHNHISDSGSETSGESSNGSGRRRMKLNRKMSSPMAPPFMVSAPGKVIVFGEHSVVHGKAAIAAAISLRSYLHVTTLSKSKRTVSLRFADIGLVHTWNIEDLPWEAFQQPSKKKSYYSLVTELDPDLVAAIQPHIEVVSPNHPEEIRRVHHSSVSAFLYLFLSLGSPSFPPCLYTLRSTIPIGAGLGSSASVSVCLASALLLQLRTLSGPHPDQPADEARLQVERINRWAFVSEMCIHGNPSGVDNTVATQGKAVVFQRTDYSKPPNVRPLWDFPELPLLLVDTRQAKSTAHEVAKVAKLKQTHPKLVNSILDAMDKVTDAASELIEETSFDNGSVEDLSKVGELMTINHGLLVSLGVSHPRLERVRELVDHEGIGWTKLTGAGGGGCSITLLRPDVPAEKLQKLEERLETENYAKFETTLGGDGIGVLWPAVLKNGTEEDEEGGMEIDLEKFLEAEGTEGVEKLVGVHGDTGEREGWKFWRVESQ.

Positions 1-46 are disordered; it reads MPPSNPAMVNGLNGSHANGNGNGHNHISDSGSETSGESSNGSGRRR. Residues 10–42 are compositionally biased toward low complexity; the sequence is NGLNGSHANGNGNGHNHISDSGSETSGESSNGS. ATP-binding positions include Lys68, Ser200, and 205–211; that span reads GAGLGSS. The Mg(2+) site is built by Ser211 and Glu256. Asp267 serves as the catalytic Proton acceptor.

This sequence belongs to the GHMP kinase family. Mevalonate kinase subfamily. In terms of assembly, homodimer. It depends on Mg(2+) as a cofactor.

It localises to the cytoplasm. It is found in the cytosol. The catalysed reaction is (R)-mevalonate + ATP = (R)-5-phosphomevalonate + ADP + H(+). It participates in isoprenoid biosynthesis; isopentenyl diphosphate biosynthesis via mevalonate pathway; isopentenyl diphosphate from (R)-mevalonate: step 1/3. Mevalonate kinase; part of the second module of ergosterol biosynthesis pathway that includes the middle steps of the pathway. ERG12 converts mevalonate into 5-phosphomevalonate. The second module is carried out in the vacuole and involves the formation of farnesyl diphosphate, which is also an important intermediate in the biosynthesis of ubiquinone, dolichol, heme and prenylated proteins. Activity by the mevalonate kinase ERG12 (FG05912) first converts mevalonate into 5-phosphomevalonate. 5-phosphomevalonate is then further converted to 5-diphosphomevalonate by the phosphomevalonate kinase ERG8 (FG09764). The diphosphomevalonate decarboxylase ERG19 (FG10424) then produces isopentenyl diphosphate. The isopentenyl-diphosphate delta-isomerase IDI1 (FG09722) then catalyzes the 1,3-allylic rearrangement of the homoallylic substrate isopentenyl (IPP) to its highly electrophilic allylic isomer, dimethylallyl diphosphate (DMAPP). Finally the farnesyl diphosphate synthase ERG20 (FG06784) catalyzes the sequential condensation of isopentenyl pyrophosphate with dimethylallyl pyrophosphate, and then with the resultant geranylpyrophosphate to the ultimate product farnesyl pyrophosphate. This Gibberella zeae (strain ATCC MYA-4620 / CBS 123657 / FGSC 9075 / NRRL 31084 / PH-1) (Wheat head blight fungus) protein is Mevalonate kinase ERG12.